Consider the following 384-residue polypeptide: L-cysteine:1D-myo-inositol 2-amino-2-deoxy-alpha-D-glucopyranoside ligase (384 aa).

Cys16 serves as a coordination point for Zn(2+). Residues 16-19, Thr31, and 54-56 contribute to the L-cysteinyl-5'-AMP site; these read CGIT and NVT. Positions 18–28 match the 'HIGH' region motif; sequence ITPYDATHLGH. A 'ERGGDP' region motif is present at residues 159 to 164; that stretch reads ERGGDP. Trp199 is an L-cysteinyl-5'-AMP binding site. Position 203 (Cys203) interacts with Zn(2+). L-cysteinyl-5'-AMP is bound at residue 221–223; that stretch reads GSD. His228 is a Zn(2+) binding site. Residue Ile255 coordinates L-cysteinyl-5'-AMP. The short motif at 261–265 is the 'KMSKS' region element; that stretch reads KMSKS.

The protein belongs to the class-I aminoacyl-tRNA synthetase family. MshC subfamily. As to quaternary structure, monomer. It depends on Zn(2+) as a cofactor.

The enzyme catalyses 1D-myo-inositol 2-amino-2-deoxy-alpha-D-glucopyranoside + L-cysteine + ATP = 1D-myo-inositol 2-(L-cysteinylamino)-2-deoxy-alpha-D-glucopyranoside + AMP + diphosphate + H(+). Functionally, catalyzes the ATP-dependent condensation of GlcN-Ins and L-cysteine to form L-Cys-GlcN-Ins. This is L-cysteine:1D-myo-inositol 2-amino-2-deoxy-alpha-D-glucopyranoside ligase from Mycobacterium avium (strain 104).